Consider the following 179-residue polypeptide: ATP-dependent protease subunit HslV (179 aa).

The active site involves Thr6. Na(+) contacts are provided by Ser164, Cys167, and Thr170.

It belongs to the peptidase T1B family. HslV subfamily. As to quaternary structure, a double ring-shaped homohexamer of HslV is capped on each side by a ring-shaped HslU homohexamer. The assembly of the HslU/HslV complex is dependent on binding of ATP.

Its subcellular location is the cytoplasm. The enzyme catalyses ATP-dependent cleavage of peptide bonds with broad specificity.. With respect to regulation, allosterically activated by HslU binding. In terms of biological role, protease subunit of a proteasome-like degradation complex believed to be a general protein degrading machinery. This Listeria innocua serovar 6a (strain ATCC BAA-680 / CLIP 11262) protein is ATP-dependent protease subunit HslV.